A 320-amino-acid polypeptide reads, in one-letter code: ATP-dependent 6-phosphofructokinase (320 aa).

Glycine 11 contributes to the ATP binding site. 21–25 serves as a coordination point for ADP; sequence RAVTK. ATP is bound by residues 72 to 73 and 102 to 105; these read RF and GDGS. Aspartate 103 is a binding site for Mg(2+). 125 to 127 lines the substrate pocket; sequence TID. Aspartate 127 (proton acceptor) is an active-site residue. Arginine 154 contacts ADP. Residues arginine 162 and 169–171 contribute to the substrate site; that span reads MGR. Residues 185–187 and 213–215 each bind ADP; these read GAD and KDH. Residues glutamate 222, arginine 243, and 249–252 each bind substrate; that span reads HMQR.

This sequence belongs to the phosphofructokinase type A (PFKA) family. ATP-dependent PFK group I subfamily. Prokaryotic clade 'B1' sub-subfamily. In terms of assembly, homotetramer. Mg(2+) serves as cofactor.

The protein localises to the cytoplasm. It carries out the reaction beta-D-fructose 6-phosphate + ATP = beta-D-fructose 1,6-bisphosphate + ADP + H(+). It participates in carbohydrate degradation; glycolysis; D-glyceraldehyde 3-phosphate and glycerone phosphate from D-glucose: step 3/4. With respect to regulation, allosterically activated by ADP and other diphosphonucleosides, and allosterically inhibited by phosphoenolpyruvate. Catalyzes the phosphorylation of D-fructose 6-phosphate to fructose 1,6-bisphosphate by ATP, the first committing step of glycolysis. The polypeptide is ATP-dependent 6-phosphofructokinase (Lactobacillus helveticus (strain DPC 4571)).